A 536-amino-acid polypeptide reads, in one-letter code: Glucose-6-phosphate isomerase (536 aa).

Catalysis depends on glutamate 345, which acts as the Proton donor. Residues histidine 376 and lysine 505 contribute to the active site.

This sequence belongs to the GPI family.

The protein resides in the cytoplasm. The enzyme catalyses alpha-D-glucose 6-phosphate = beta-D-fructose 6-phosphate. It functions in the pathway carbohydrate biosynthesis; gluconeogenesis. Its pathway is carbohydrate degradation; glycolysis; D-glyceraldehyde 3-phosphate and glycerone phosphate from D-glucose: step 2/4. Its function is as follows. Catalyzes the reversible isomerization of glucose-6-phosphate to fructose-6-phosphate. The polypeptide is Glucose-6-phosphate isomerase (Ruegeria sp. (strain TM1040) (Silicibacter sp.)).